The chain runs to 131 residues: Small ribosomal subunit protein uS11 (131 aa).

This sequence belongs to the universal ribosomal protein uS11 family. In terms of assembly, part of the 30S ribosomal subunit. Interacts with proteins S7 and S18. Binds to IF-3.

Its function is as follows. Located on the platform of the 30S subunit, it bridges several disparate RNA helices of the 16S rRNA. Forms part of the Shine-Dalgarno cleft in the 70S ribosome. The protein is Small ribosomal subunit protein uS11 of Trichormus variabilis (strain ATCC 29413 / PCC 7937) (Anabaena variabilis).